The primary structure comprises 122 residues: MIQMQTVLNVADNSGAKKVACIKVLGGSKRRYAGVGDVIVVAVKEAMPNSKVKKGDVMKAVIVRTAKEVRRQDGSYLKFDDNSAVLISNQMEPIGTRIFGPVARELRARQFMKIISLAPEVL.

The protein belongs to the universal ribosomal protein uL14 family. As to quaternary structure, part of the 50S ribosomal subunit. Forms a cluster with proteins L3 and L19. In the 70S ribosome, L14 and L19 interact and together make contacts with the 16S rRNA in bridges B5 and B8.

Binds to 23S rRNA. Forms part of two intersubunit bridges in the 70S ribosome. In Syntrophus aciditrophicus (strain SB), this protein is Large ribosomal subunit protein uL14.